The primary structure comprises 162 residues: Larval cuticle protein F1 (162 aa).

4 repeat units span residues 27-30, 43-46, 59-62, and 75-78.

Its function is as follows. Component of the larval cuticle. The chain is Larval cuticle protein F1 from Tenebrio molitor (Yellow mealworm beetle).